Here is a 314-residue protein sequence, read N- to C-terminus: DNA-directed RNA polymerase subunit alpha (314 aa).

Positions 1-228 (MIEIEKPKIE…EHLNIFVGLT (228 aa)) are alpha N-terminal domain (alpha-NTD). An alpha C-terminal domain (alpha-CTD) region spans residues 245-314 (KEKVLEMTIE…ELGLGLRKDD (70 aa)).

Belongs to the RNA polymerase alpha chain family. As to quaternary structure, homodimer. The RNAP catalytic core consists of 2 alpha, 1 beta, 1 beta' and 1 omega subunit. When a sigma factor is associated with the core the holoenzyme is formed, which can initiate transcription.

It catalyses the reaction RNA(n) + a ribonucleoside 5'-triphosphate = RNA(n+1) + diphosphate. Its function is as follows. DNA-dependent RNA polymerase catalyzes the transcription of DNA into RNA using the four ribonucleoside triphosphates as substrates. This is DNA-directed RNA polymerase subunit alpha from Bacillus thuringiensis (strain Al Hakam).